The primary structure comprises 599 residues: Elongation factor 4 (599 aa).

The tr-type G domain occupies 2–184; it reads KNIRNFSIIA…RLVRDIPPPE (183 aa). Residues 14–19 and 131–134 contribute to the GTP site; these read DHGKST and NKID.

It belongs to the TRAFAC class translation factor GTPase superfamily. Classic translation factor GTPase family. LepA subfamily.

It localises to the cell inner membrane. The enzyme catalyses GTP + H2O = GDP + phosphate + H(+). Functionally, required for accurate and efficient protein synthesis under certain stress conditions. May act as a fidelity factor of the translation reaction, by catalyzing a one-codon backward translocation of tRNAs on improperly translocated ribosomes. Back-translocation proceeds from a post-translocation (POST) complex to a pre-translocation (PRE) complex, thus giving elongation factor G a second chance to translocate the tRNAs correctly. Binds to ribosomes in a GTP-dependent manner. This is Elongation factor 4 from Escherichia coli (strain SE11).